The chain runs to 128 residues: Ribosome-binding factor A (128 aa).

The protein belongs to the RbfA family. Monomer. Binds 30S ribosomal subunits, but not 50S ribosomal subunits or 70S ribosomes.

The protein resides in the cytoplasm. One of several proteins that assist in the late maturation steps of the functional core of the 30S ribosomal subunit. Associates with free 30S ribosomal subunits (but not with 30S subunits that are part of 70S ribosomes or polysomes). Required for efficient processing of 16S rRNA. May interact with the 5'-terminal helix region of 16S rRNA. The protein is Ribosome-binding factor A of Rickettsia prowazekii (strain Madrid E).